A 145-amino-acid chain; its full sequence is CASP-like protein SELMODRAFT_406854 (145 aa).

Over 1–31 (MGVASQSSVANEAGAAPEASIQQTLRGFSSP) the chain is Cytoplasmic. Residues 32–52 (TSLLLRIATAVLCTLTLAFLV) form a helical membrane-spanning segment. Topologically, residues 53 to 75 (TSKERKEIASIDIVAIWSNSKAL) are extracellular. Residues 76–96 (IFLAVVSGICLGYSLLHAAVF) traverse the membrane as a helical segment. At 97 to 112 (LVMLSGNRKPLARKKA) the chain is on the cytoplasmic side. The chain crosses the membrane as a helical span at residues 113-133 (LDWMVFLADQVFFKIFCWFSI). Residues 134–145 (RVSSRRSKAGFV) are Extracellular-facing.

This sequence belongs to the Casparian strip membrane proteins (CASP) family. In terms of assembly, homodimer and heterodimers.

The protein resides in the cell membrane. This Selaginella moellendorffii (Spikemoss) protein is CASP-like protein SELMODRAFT_406854.